The sequence spans 95 residues: Small ribosomal subunit protein bS6 (95 aa).

This sequence belongs to the bacterial ribosomal protein bS6 family.

Its function is as follows. Binds together with bS18 to 16S ribosomal RNA. The chain is Small ribosomal subunit protein bS6 from Symbiobacterium thermophilum (strain DSM 24528 / JCM 14929 / IAM 14863 / T).